The chain runs to 288 residues: N(1)-aminopropylagmatine ureohydrolase (288 aa).

H114, D133, H135, D137, D213, and D215 together coordinate Mn(2+).

The protein belongs to the arginase family. Mn(2+) serves as cofactor.

It is found in the cytoplasm. The enzyme catalyses N(1)-(3-aminopropyl)agmatine + H2O = urea + spermidine. It carries out the reaction agmatine + H2O = urea + putrescine. It participates in amine and polyamine biosynthesis; spermidine biosynthesis. Involved in the biosynthesis of polyamines which are thought to support the growth of thermophilic microorganisms under high-temperature conditions. It seems that long-chain and branched-chain of polyamines effectively stabilize DNA and RNA, respectively. Catalyzes the decarboxylation of N1-(3-aminopropyl)agmatine to yield spermidine and urea. It can also use agmatine to yield putrescine. This chain is N(1)-aminopropylagmatine ureohydrolase, found in Thermococcus kodakarensis (strain ATCC BAA-918 / JCM 12380 / KOD1) (Pyrococcus kodakaraensis (strain KOD1)).